The sequence spans 574 residues: K(+)/H(+) antiporter NhaP2 (574 aa).

Transmembrane regions (helical) follow at residues 6–26 (INSF…LSPV), 34–54 (ILLI…GGIL), 58–78 (YSTA…DGGM), 87–107 (VALW…TSIT), 109–129 (VMAA…GAIV), 173–193 (IAIL…ISFI), 196–216 (FGLG…LVNL), 219–239 (LAEG…YAAS), 242–262 (LGGS…NKPT), 271–291 (VLDG…GLLL), 299–319 (IWLP…PLAV), 335–355 (WFIS…VFPM), and 359–379 (LPGA…SLLV). Residues 405–486 (SGVEIYPSSE…LEALSNLFSQ (82 aa)) form the RCK C-terminal domain.

It belongs to the monovalent cation:proton antiporter 1 (CPA1) transporter (TC 2.A.36) family. NhaP2 subfamily.

It is found in the cell inner membrane. The catalysed reaction is K(+)(in) + H(+)(out) = K(+)(out) + H(+)(in). Functionally, k(+)/H(+) antiporter that extrudes potassium in exchange for external protons and maintains the internal concentration of potassium under toxic levels. This is K(+)/H(+) antiporter NhaP2 from Shewanella sp. (strain MR-7).